The chain runs to 92 residues: Small ribosomal subunit protein uS19c (92 aa).

It belongs to the universal ribosomal protein uS19 family.

The protein localises to the plastid. It is found in the chloroplast. In terms of biological role, protein S19 forms a complex with S13 that binds strongly to the 16S ribosomal RNA. In Chlorella vulgaris (Green alga), this protein is Small ribosomal subunit protein uS19c (rps19).